Reading from the N-terminus, the 710-residue chain is Ribonuclease R (710 aa).

The RNB domain occupies 246–573 (RKDLRDKVIV…VHRLLKLYLE (328 aa)). In terms of domain architecture, S1 motif spans 625–705 (GEVFNVVVTN…IRGEIDFVLV (81 aa)).

This sequence belongs to the RNR ribonuclease family. RNase R subfamily.

Its subcellular location is the cytoplasm. It catalyses the reaction Exonucleolytic cleavage in the 3'- to 5'-direction to yield nucleoside 5'-phosphates.. Functionally, 3'-5' exoribonuclease that releases 5'-nucleoside monophosphates and is involved in maturation of structured RNAs. This is Ribonuclease R from Thermotoga maritima (strain ATCC 43589 / DSM 3109 / JCM 10099 / NBRC 100826 / MSB8).